The chain runs to 442 residues: tRNA modification GTPase MnmE (442 aa).

(6S)-5-formyl-5,6,7,8-tetrahydrofolate-binding residues include Arg24, Glu84, and Arg124. The region spanning 218–366 (GARVALFGPV…LRDDMLGRLW (149 aa)) is the TrmE-type G domain. Residues 228–233 (NAGKST), 247–253 (DDEPGTT), and 272–275 (DTAG) each bind GTP. The Mg(2+) site is built by Ser232 and Thr253. (6S)-5-formyl-5,6,7,8-tetrahydrofolate is bound at residue Lys442.

It belongs to the TRAFAC class TrmE-Era-EngA-EngB-Septin-like GTPase superfamily. TrmE GTPase family. As to quaternary structure, homodimer. Heterotetramer of two MnmE and two MnmG subunits. K(+) is required as a cofactor.

Its subcellular location is the cytoplasm. Functionally, exhibits a very high intrinsic GTPase hydrolysis rate. Involved in the addition of a carboxymethylaminomethyl (cmnm) group at the wobble position (U34) of certain tRNAs, forming tRNA-cmnm(5)s(2)U34. The sequence is that of tRNA modification GTPase MnmE from Myxococcus xanthus (strain DK1622).